Reading from the N-terminus, the 241-residue chain is Uridylate kinase (241 aa).

An ATP-binding site is contributed by 12 to 15; that stretch reads KISG. Residues 20-25 are involved in allosteric activation by GTP; it reads GEKGTG. Gly54 serves as a coordination point for UMP. ATP is bound by residues Gly55 and Arg59. Residues Asp74 and 135–142 each bind UMP; that span reads TGNPYFST. The ATP site is built by Asn163, Tyr169, and Asp172.

The protein belongs to the UMP kinase family. As to quaternary structure, homohexamer.

The protein resides in the cytoplasm. The catalysed reaction is UMP + ATP = UDP + ADP. Its pathway is pyrimidine metabolism; CTP biosynthesis via de novo pathway; UDP from UMP (UMPK route): step 1/1. Its activity is regulated as follows. Allosterically activated by GTP. Inhibited by UTP. In terms of biological role, catalyzes the reversible phosphorylation of UMP to UDP. This chain is Uridylate kinase, found in Lactobacillus delbrueckii subsp. bulgaricus (strain ATCC 11842 / DSM 20081 / BCRC 10696 / JCM 1002 / NBRC 13953 / NCIMB 11778 / NCTC 12712 / WDCM 00102 / Lb 14).